Consider the following 142-residue polypeptide: MAP3K7 C-terminal-like protein (142 aa).

As to expression, ubiquitous.

The protein is MAP3K7 C-terminal-like protein (Map3k7cl) of Mus musculus (Mouse).